A 429-amino-acid chain; its full sequence is Probable M18 family aminopeptidase 2 (429 aa).

Positions 82, 156, and 401 each coordinate Zn(2+).

Belongs to the peptidase M18 family. It depends on Zn(2+) as a cofactor.

The protein is Probable M18 family aminopeptidase 2 of Pseudomonas entomophila (strain L48).